The sequence spans 452 residues: Maltoporin (452 aa).

The N-terminal stretch at 1 to 25 (MMITLRKLPLAVAVAAGVMSAQAMA) is a signal peptide.

It belongs to the porin LamB (TC 1.B.3) family. As to quaternary structure, homotrimer formed of three 18-stranded antiparallel beta-barrels, containing three independent channels.

Its subcellular location is the cell outer membrane. The catalysed reaction is beta-maltose(in) = beta-maltose(out). In terms of biological role, involved in the transport of maltose and maltodextrins. The chain is Maltoporin from Salmonella enteritidis PT4 (strain P125109).